The sequence spans 444 residues: VEPSGHAADRIARLPGQPAVDFDMYSGYITVDEGAGRSLFYLLQEAPEDAQPAPLVLWLNGGPGCSSVAYGASEELGAFRVKPRGAGLVLNEYRWNKVANVLFLDSPAGVGFSYTNTSSDIYTSGDNRTAHDSYAFLAKWFERFPHYKYRDFYIAGESYAGHYVPELSQLVHRSKNPVINLKGFMVGNGLIDDYHDYVGTFEFWWNHGIVSDDTYRRLKEACLHDSFIHPSPACDAATDVATAEQGNIDMYSLYTPVCNITSSSSSSSSSLSQQRRSRGRYPWLTGSYDPCTERYSTAYYNRRDVQMALHANVTGAMNYTWATCSDTINTHWHDAPRSMLPIYRELIAAGLRIWVFSGDTDAVVPLTATRYSIGALGLPTTTSWYPWYDDQEVGGWSQVYKGLTLVSVRGAGHEVPLHRPRQALVLFQYFLQGKPMPGQTKNAT.

Residue 60-62 (NGG) coordinates substrate. Intrachain disulfides connect Cys65-Cys324, Cys222-Cys234, and Cys258-Cys291. N-linked (GlcNAc...) asparagine glycans are attached at residues Asn116 and Asn127. A substrate-binding site is contributed by 157–159 (ESY). The active site involves Ser158. A glycan (N-linked (GlcNAc...) asparagine) is linked at Asn259. Positions 260-286 (ITSSSSSSSSSLSQQRRSRGRYPWLTG) are cleaved as a propeptide — linker peptide. 2 N-linked (GlcNAc...) asparagine glycosylation sites follow: Asn312 and Asn318. Catalysis depends on residues Asp361 and His413. 409-413 (RGAGH) contributes to the substrate binding site.

The protein belongs to the peptidase S10 family. As to quaternary structure, carboxypeptidase II is a dimer, where each monomer is composed of two chains linked by a disulfide bond. Post-translationally, N-glycosylated.

The enzyme catalyses Preferential release of a C-terminal arginine or lysine residue.. This is Serine carboxypeptidase 2 (CBP2) from Triticum aestivum (Wheat).